A 140-amino-acid chain; its full sequence is Nucleoside diphosphate kinase (140 aa).

ATP is bound by residues lysine 10, phenylalanine 58, arginine 86, threonine 92, arginine 103, and asparagine 113. Histidine 116 (pros-phosphohistidine intermediate) is an active-site residue.

Belongs to the NDK family. Homotetramer. The cofactor is Mg(2+).

The protein localises to the cytoplasm. The catalysed reaction is a 2'-deoxyribonucleoside 5'-diphosphate + ATP = a 2'-deoxyribonucleoside 5'-triphosphate + ADP. It catalyses the reaction a ribonucleoside 5'-diphosphate + ATP = a ribonucleoside 5'-triphosphate + ADP. Major role in the synthesis of nucleoside triphosphates other than ATP. The ATP gamma phosphate is transferred to the NDP beta phosphate via a ping-pong mechanism, using a phosphorylated active-site intermediate. The chain is Nucleoside diphosphate kinase from Anaplasma phagocytophilum (strain HZ).